Consider the following 1231-residue polypeptide: Protein FAM193A (1231 aa).

A coiled-coil region spans residues 106–142 (CTEDMYSTLLQRYQRSEEELRKVAEEWLECQKRIDAY). Positions 249 to 272 (DYLSEMRPPSVSSASSGSGSSSPI) are disordered. Residues 258-270 (SVSSASSGSGSSS) are compositionally biased toward low complexity. A Phosphoserine modification is found at serine 293. Disordered regions lie at residues 331–405 (NGGG…QAEQ), 633–703 (QSSS…APSF), 719–789 (SFCP…NQKE), 826–845 (LTKRKEEQPKKMEQISEREG), and 860–1174 (NSSE…SSLD). Positions 355–365 (EADDEDADGES) are enriched in acidic residues. Serine 648 is modified (phosphoserine). A compositionally biased stretch (low complexity) spans 676–691 (LAPLPALSPSALSPAS). A compositionally biased stretch (acidic residues) spans 761–773 (QQDDGDESADEDS). The segment covering 776-785 (EHSSSTSTST) has biased composition (low complexity). The span at 872–881 (AAKRARHKQR) shows a compositional bias: basic residues. Residues 877-973 (RHKQRKLEEK…ATESISNSEN (97 aa)) are a coiled coil. Over residues 882 to 909 (KLEEKARLEAEARAREHLHHQEEQKQRE) the composition is skewed to basic and acidic residues. The span at 910-920 (EEEDEEEEDEE) shows a compositional bias: acidic residues. Basic and acidic residues predominate over residues 921 to 935 (QHFKEEFQRLQELQK). The segment covering 937-946 (RAAKKKKKDR) has biased composition (basic residues). Polar residues predominate over residues 962 to 979 (QAATESISNSENIHNGSL). A phosphoserine mark is found at serine 1136 and serine 1151. Basic residues predominate over residues 1156-1166 (GKNKKNKKKKG).

The protein belongs to the FAM193 family.

This Mus musculus (Mouse) protein is Protein FAM193A (Fam193a).